We begin with the raw amino-acid sequence, 211 residues long: Arginine exporter protein ArgO (211 aa).

The next 6 helical transmembrane spans lie at M1–P21, L37–G57, L68–L88, I111–V131, W147–A167, and A179–A199.

This sequence belongs to the LysE/ArgO transporter (TC 2.A.75) family.

It is found in the cell inner membrane. The enzyme catalyses L-arginine(in) = L-arginine(out). Its function is as follows. Involved in the export of arginine. Important to control the intracellular level of arginine and the correct balance between arginine and lysine. The protein is Arginine exporter protein ArgO of Salmonella choleraesuis (strain SC-B67).